Consider the following 352-residue polypeptide: Putative squamosa promoter-binding-like protein 19 (352 aa).

A disordered region spans residues 68 to 88 (AAAPATRRARGGSGGGGGGGG). Residues 78-88 (GGSGGGGGGGG) show a composition bias toward gly residues. The SBP-type zinc finger occupies 90–167 (AEACSVDGCR…DGHNRRRRKP (78 aa)). Residues C93, C98, C115, H118, C134, C137, H141, and C153 each contribute to the Zn(2+) site. A Bipartite nuclear localization signal motif is present at residues 150 to 166 (KKSCRKRLDGHNRRRRK). The disordered stretch occupies residues 152 to 174 (SCRKRLDGHNRRRRKPQHDALNP).

Its subcellular location is the nucleus. Trans-acting factor that binds specifically to the consensus nucleotide sequence 5'-TNCGTACAA-3'. This chain is Putative squamosa promoter-binding-like protein 19 (SPL19), found in Oryza sativa subsp. japonica (Rice).